Here is a 226-residue protein sequence, read N- to C-terminus: MRAVVLISGGMDSLVVAAQARALGYELAAMHVNYGQRTWQKELTAFRRICSHYAIERKLEVDAAYLEHIGGSSLTDSSIPVEQADLQTVAIPSSYVPFRNASFLSMAVSWSEVIGAERIFIGAVEEDSSGYPDCRKIFYDAFNKVIELGTKPETTIEIRTPLIDLQKSEIVRKGVELDVPFFHSWSCYKSEGKACGLCDSCARRLRAFQLVGLDDPIDYEVRPDYI.

7-17 (ISGGMDSLVVA) serves as a coordination point for ATP. Zn(2+) is bound by residues Cys187, Cys195, Cys198, and Cys201.

It belongs to the QueC family. Zn(2+) serves as cofactor.

The catalysed reaction is 7-carboxy-7-deazaguanine + NH4(+) + ATP = 7-cyano-7-deazaguanine + ADP + phosphate + H2O + H(+). The protein operates within purine metabolism; 7-cyano-7-deazaguanine biosynthesis. Its function is as follows. Catalyzes the ATP-dependent conversion of 7-carboxy-7-deazaguanine (CDG) to 7-cyano-7-deazaguanine (preQ(0)). This chain is 7-cyano-7-deazaguanine synthase, found in Chlorobium phaeobacteroides (strain BS1).